A 155-amino-acid chain; its full sequence is uncharacterized protein (155 aa).

Disordered regions lie at residues 24-63 and 80-155; these read RVGY…VVLK and KAAK…DENE. Position 50 is a phosphoserine (Ser50). Residue Lys108 is modified to N6-acetyllysine. The segment covering 128 to 147 has biased composition (polar residues); that stretch reads KQSSVRKNSQKQIKNSSLLS. 3 positions are modified to phosphoserine: Ser130, Ser147, and Ser150.

This is an uncharacterized protein from Mus musculus (Mouse).